The following is a 267-amino-acid chain: Hydroxyethylthiazole kinase (267 aa).

Substrate is bound at residue M42. 2 residues coordinate ATP: C118 and T162. Substrate is bound at residue G189.

The protein belongs to the Thz kinase family. Mg(2+) is required as a cofactor.

The catalysed reaction is 5-(2-hydroxyethyl)-4-methylthiazole + ATP = 4-methyl-5-(2-phosphooxyethyl)-thiazole + ADP + H(+). Its pathway is cofactor biosynthesis; thiamine diphosphate biosynthesis; 4-methyl-5-(2-phosphoethyl)-thiazole from 5-(2-hydroxyethyl)-4-methylthiazole: step 1/1. Its function is as follows. Catalyzes the phosphorylation of the hydroxyl group of 4-methyl-5-beta-hydroxyethylthiazole (THZ). The polypeptide is Hydroxyethylthiazole kinase (Rubrobacter xylanophilus (strain DSM 9941 / JCM 11954 / NBRC 16129 / PRD-1)).